Consider the following 1317-residue polypeptide: DNA-directed RNA polymerase subunit beta' (1317 aa).

Positions 214, 286, 293, and 296 each coordinate Zn(2+). A disordered region spans residues 1279–1317 (RAYAGTQLSQDDEEFEETYDTDEDDFDMDDDDDFGDDED). The span at 1288 to 1317 (QDDEEFEETYDTDEDDFDMDDDDDFGDDED) shows a compositional bias: acidic residues.

It belongs to the RNA polymerase beta' chain family. RpoC2 subfamily. In terms of assembly, in cyanobacteria the RNAP catalytic core is composed of 2 alpha, 1 beta, 1 beta', 1 gamma and 1 omega subunit. When a sigma factor is associated with the core the holoenzyme is formed, which can initiate transcription. It depends on Zn(2+) as a cofactor.

It catalyses the reaction RNA(n) + a ribonucleoside 5'-triphosphate = RNA(n+1) + diphosphate. In terms of biological role, DNA-dependent RNA polymerase catalyzes the transcription of DNA into RNA using the four ribonucleoside triphosphates as substrates. The protein is DNA-directed RNA polymerase subunit beta' of Synechocystis sp. (strain ATCC 27184 / PCC 6803 / Kazusa).